The chain runs to 389 residues: MTQGRLFYPLAVLQDRHFRSKYPNYNESRELKTWSVVSKRFPAWEQKLVSMLLDNKYAESIIFINSDVSMSSVGVFKRTKLLIRTHILNSHYKAVIDFESRLNTQPITSEPTELADFIECKLLLILNWFLRGEYHQCLQRFIQLIIDIPNLVELMVTLPKDDIFISNETMFYIITVSALVSIPLDNLDTFIHLEELEQFHKHFDVLAGKGKLIINSKFMKFFDWWHNDMERLCKQDYFLEKKWDIISKTMRQKMYAFYLRIATKIQISYLSERVGISREIVTQEITQLISEACLNFQIHDDLILYQKFDPQMALNDLMMTEDITLDNKLSQLRRQNHNLRVIVDEHLALRKSRIQRRSKASDEEPMNEEEVFALSENELCNETADTFND.

One can recognise a PCI domain in the interval Gln-143–Met-312.

In terms of assembly, component of a COP9 signalosome-like (CSN) complex.

Its subcellular location is the cytoplasm. It is found in the nucleus. Its function is as follows. Component of the COP9 signalosome (CSN) complex that acts as an regulator of the ubiquitin (Ubl) conjugation pathway by mediating the deneddylation of the cullin subunit of SCF-type E3 ubiquitin-protein ligase complexes The CSN complex is involved in the regulation of the mating pheromone response. PCI8 may also be involved in transcriptional and translational control. The sequence is that of COP9 signalosome complex subunit 11 (PCI8) from Kluyveromyces lactis (strain ATCC 8585 / CBS 2359 / DSM 70799 / NBRC 1267 / NRRL Y-1140 / WM37) (Yeast).